Consider the following 274-residue polypeptide: Dermonecrotic toxin SdSicTox-betaIIB1bix (274 aa).

Histidine 5 is a catalytic residue. 2 residues coordinate Mg(2+): glutamate 25 and aspartate 27. Histidine 41 serves as the catalytic Nucleophile. 2 cysteine pairs are disulfide-bonded: cysteine 45–cysteine 51 and cysteine 47–cysteine 190. Aspartate 85 serves as a coordination point for Mg(2+).

Belongs to the arthropod phospholipase D family. Class II subfamily. Mg(2+) is required as a cofactor. In terms of tissue distribution, expressed by the venom gland.

The protein resides in the secreted. It catalyses the reaction an N-(acyl)-sphingosylphosphocholine = an N-(acyl)-sphingosyl-1,3-cyclic phosphate + choline. The enzyme catalyses an N-(acyl)-sphingosylphosphoethanolamine = an N-(acyl)-sphingosyl-1,3-cyclic phosphate + ethanolamine. It carries out the reaction a 1-acyl-sn-glycero-3-phosphocholine = a 1-acyl-sn-glycero-2,3-cyclic phosphate + choline. The catalysed reaction is a 1-acyl-sn-glycero-3-phosphoethanolamine = a 1-acyl-sn-glycero-2,3-cyclic phosphate + ethanolamine. Functionally, dermonecrotic toxins cleave the phosphodiester linkage between the phosphate and headgroup of certain phospholipids (sphingolipid and lysolipid substrates), forming an alcohol (often choline) and a cyclic phosphate. This toxin acts on sphingomyelin (SM). It may also act on ceramide phosphoethanolamine (CPE), lysophosphatidylcholine (LPC) and lysophosphatidylethanolamine (LPE), but not on lysophosphatidylserine (LPS), and lysophosphatidylglycerol (LPG). It acts by transphosphatidylation, releasing exclusively cyclic phosphate products as second products. Induces dermonecrosis, hemolysis, increased vascular permeability, edema, inflammatory response, and platelet aggregation. The sequence is that of Dermonecrotic toxin SdSicTox-betaIIB1bix from Sicarius cf. damarensis (strain GJB-2008) (Six-eyed sand spider).